Reading from the N-terminus, the 179-residue chain is Large ribosomal subunit protein uL5 (179 aa).

It belongs to the universal ribosomal protein uL5 family. As to quaternary structure, part of the 50S ribosomal subunit; part of the 5S rRNA/L5/L18/L25 subcomplex. Contacts the 5S rRNA and the P site tRNA. Forms a bridge to the 30S subunit in the 70S ribosome.

In terms of biological role, this is one of the proteins that bind and probably mediate the attachment of the 5S RNA into the large ribosomal subunit, where it forms part of the central protuberance. In the 70S ribosome it contacts protein S13 of the 30S subunit (bridge B1b), connecting the 2 subunits; this bridge is implicated in subunit movement. Contacts the P site tRNA; the 5S rRNA and some of its associated proteins might help stabilize positioning of ribosome-bound tRNAs. The protein is Large ribosomal subunit protein uL5 of Edwardsiella ictaluri (strain 93-146).